Consider the following 270-residue polypeptide: Transmembrane protein 176B (270 aa).

4 helical membrane-spanning segments follow: residues 65–85, 95–115, 127–147, and 209–229; these read LALG…GVCL, ASGC…GAIV, ISSL…VLCV, and LFLA…GVGL. Residues S236, S245, S254, and S258 each carry the phosphoserine modification. The interval 237–270 is disordered; it reads SQPLNEEGSEKRLLGENSVPPSPSREQTSTAIVL. Residues 260-270 are compositionally biased toward polar residues; it reads SREQTSTAIVL.

The protein belongs to the TMEM176 family. As to expression, expressed in lung and dermal fibroblasts.

The protein resides in the nucleus membrane. May play a role in the process of maturation of dendritic cells. Required for the development of cerebellar granule cells. This is Transmembrane protein 176B (TMEM176B) from Homo sapiens (Human).